The chain runs to 102 residues: NADH-quinone oxidoreductase subunit K (102 aa).

3 helical membrane-spanning segments follow: residues 6–26 (FEHA…ALLI), 30–50 (LIVM…AFIA), and 62–82 (VMFL…LGLG).

This sequence belongs to the complex I subunit 4L family. NDH-1 is composed of 14 different subunits. Subunits NuoA, H, J, K, L, M, N constitute the membrane sector of the complex.

Its subcellular location is the cell inner membrane. The catalysed reaction is a quinone + NADH + 5 H(+)(in) = a quinol + NAD(+) + 4 H(+)(out). Functionally, NDH-1 shuttles electrons from NADH, via FMN and iron-sulfur (Fe-S) centers, to quinones in the respiratory chain. The immediate electron acceptor for the enzyme in this species is believed to be ubiquinone. Couples the redox reaction to proton translocation (for every two electrons transferred, four hydrogen ions are translocated across the cytoplasmic membrane), and thus conserves the redox energy in a proton gradient. This is NADH-quinone oxidoreductase subunit K from Methylococcus capsulatus (strain ATCC 33009 / NCIMB 11132 / Bath).